Here is a 396-residue protein sequence, read N- to C-terminus: Phosphoglycerate kinase (396 aa).

Residues 19 to 21, Arg-35, 58 to 61, Arg-117, and Arg-150 contribute to the substrate site; these read DFN and HLGR. Residues Lys-201, Glu-323, and 349-352 each bind ATP; that span reads GGDT.

The protein belongs to the phosphoglycerate kinase family. Monomer.

The protein resides in the cytoplasm. It catalyses the reaction (2R)-3-phosphoglycerate + ATP = (2R)-3-phospho-glyceroyl phosphate + ADP. Its pathway is carbohydrate degradation; glycolysis; pyruvate from D-glyceraldehyde 3-phosphate: step 2/5. In Desulfosudis oleivorans (strain DSM 6200 / JCM 39069 / Hxd3) (Desulfococcus oleovorans), this protein is Phosphoglycerate kinase.